The following is a 343-amino-acid chain: Anthranilate phosphoribosyltransferase (343 aa).

Residues Gly84, 87–88, Thr92, 94–97, 112–120, and Ser124 each bind 5-phospho-alpha-D-ribose 1-diphosphate; these read GD, NIST, and KHGNRGVSS. Gly84 lines the anthranilate pocket. Ser96 contributes to the Mg(2+) binding site. Asn115 is a binding site for anthranilate. Arg170 is an anthranilate binding site. 2 residues coordinate Mg(2+): Asp229 and Glu230.

The protein belongs to the anthranilate phosphoribosyltransferase family. In terms of assembly, homodimer. Requires Mg(2+) as cofactor.

It carries out the reaction N-(5-phospho-beta-D-ribosyl)anthranilate + diphosphate = 5-phospho-alpha-D-ribose 1-diphosphate + anthranilate. The protein operates within amino-acid biosynthesis; L-tryptophan biosynthesis; L-tryptophan from chorismate: step 2/5. In terms of biological role, catalyzes the transfer of the phosphoribosyl group of 5-phosphorylribose-1-pyrophosphate (PRPP) to anthranilate to yield N-(5'-phosphoribosyl)-anthranilate (PRA). This is Anthranilate phosphoribosyltransferase from Burkholderia multivorans (strain ATCC 17616 / 249).